The chain runs to 96 residues: Large ribosomal subunit protein bL27 (96 aa).

The disordered stretch occupies residues 13–33 (KGGGSTANGRNSAGRRLGAKA).

This sequence belongs to the bacterial ribosomal protein bL27 family.

This Lactobacillus acidophilus (strain ATCC 700396 / NCK56 / N2 / NCFM) protein is Large ribosomal subunit protein bL27.